Consider the following 258-residue polypeptide: Imidazole glycerol phosphate synthase subunit HisF (258 aa).

Active-site residues include aspartate 11 and aspartate 130.

The protein belongs to the HisA/HisF family. In terms of assembly, heterodimer of HisH and HisF.

The protein resides in the cytoplasm. It carries out the reaction 5-[(5-phospho-1-deoxy-D-ribulos-1-ylimino)methylamino]-1-(5-phospho-beta-D-ribosyl)imidazole-4-carboxamide + L-glutamine = D-erythro-1-(imidazol-4-yl)glycerol 3-phosphate + 5-amino-1-(5-phospho-beta-D-ribosyl)imidazole-4-carboxamide + L-glutamate + H(+). Its pathway is amino-acid biosynthesis; L-histidine biosynthesis; L-histidine from 5-phospho-alpha-D-ribose 1-diphosphate: step 5/9. In terms of biological role, IGPS catalyzes the conversion of PRFAR and glutamine to IGP, AICAR and glutamate. The HisF subunit catalyzes the cyclization activity that produces IGP and AICAR from PRFAR using the ammonia provided by the HisH subunit. In Methylorubrum populi (strain ATCC BAA-705 / NCIMB 13946 / BJ001) (Methylobacterium populi), this protein is Imidazole glycerol phosphate synthase subunit HisF.